A 248-amino-acid polypeptide reads, in one-letter code: Pyridoxine 5'-phosphate synthase (248 aa).

3-amino-2-oxopropyl phosphate is bound at residue N9. 11–12 (DH) is a binding site for 1-deoxy-D-xylulose 5-phosphate. R20 contributes to the 3-amino-2-oxopropyl phosphate binding site. Catalysis depends on H45, which acts as the Proton acceptor. R47 and H52 together coordinate 1-deoxy-D-xylulose 5-phosphate. Catalysis depends on E72, which acts as the Proton acceptor. T102 is a binding site for 1-deoxy-D-xylulose 5-phosphate. The active-site Proton donor is the H193. 3-amino-2-oxopropyl phosphate contacts are provided by residues G194 and 215 to 216 (GH).

It belongs to the PNP synthase family. In terms of assembly, homooctamer; tetramer of dimers.

The protein localises to the cytoplasm. The enzyme catalyses 3-amino-2-oxopropyl phosphate + 1-deoxy-D-xylulose 5-phosphate = pyridoxine 5'-phosphate + phosphate + 2 H2O + H(+). The protein operates within cofactor biosynthesis; pyridoxine 5'-phosphate biosynthesis; pyridoxine 5'-phosphate from D-erythrose 4-phosphate: step 5/5. Its function is as follows. Catalyzes the complicated ring closure reaction between the two acyclic compounds 1-deoxy-D-xylulose-5-phosphate (DXP) and 3-amino-2-oxopropyl phosphate (1-amino-acetone-3-phosphate or AAP) to form pyridoxine 5'-phosphate (PNP) and inorganic phosphate. This Hydrogenovibrio crunogenus (strain DSM 25203 / XCL-2) (Thiomicrospira crunogena) protein is Pyridoxine 5'-phosphate synthase.